The chain runs to 216 residues: Gamma-glutamylcyclotransferase 2-1 (216 aa).

Residue Val5–Ser10 coordinates substrate. Glu87 serves as the catalytic Proton acceptor.

It belongs to the gamma-glutamylcyclotransferase family. The cofactor is Mn(2+). In terms of tissue distribution, expressed in the central vascular bundle of roots, leaf veins, hydathodes, cauline leaves, shoot apex, sepal veins, flower receptacles and developing seeds.

The protein resides in the cytoplasm. It carries out the reaction an alpha-(gamma-L-glutamyl)-L-amino acid = 5-oxo-L-proline + an L-alpha-amino acid. Catalyzes the formation of 5-oxoproline from gamma-glutamyl dipeptides and plays a significant role in glutathione (GSH) homeostasis. Converts both GSH and gamma-glutamyl-L-alanine to 5-oxoproline in vitro. Plays a role in detoxification of heavy metals and metalloids by recycling glutamate and maintaining GSH homeostasis. This Arabidopsis thaliana (Mouse-ear cress) protein is Gamma-glutamylcyclotransferase 2-1.